The following is a 3210-amino-acid chain: PF 1022-synthetase (3210 aa).

Residues 68-454 (VDDRRHAIGH…VKELDVVTAE (387 aa)) are condensation 1. Residues 483–876 (AGDPNKAAVF…GRKDSQVKIR (394 aa)) form an adenylation 1 region. In terms of domain architecture, Carrier 1 spans 1010–1086 (APATGIEVKL…GLVDVIGRDP (77 aa)). An O-(pantetheine 4'-phosphoryl)serine modification is found at serine 1047. Residues 1104–1534 (SFAQGRLWFL…RTPIAVLPLT (431 aa)) are condensation 2. The adenylation 2 stretch occupies residues 1563 to 2023 (FRKQVAAHPH…GRMDQQVKIR (461 aa)). An S-adenosyl-L-methionine-dependent N-methyltransferase region spans residues 2081–2236 (EGWKDFFESN…YLLEVVESLV (156 aa)). Carrier domains lie at 2570 to 2644 (DPFV…RQGL) and 2668 to 2742 (TPSD…RLTQ). O-(pantetheine 4'-phosphoryl)serine is present on residues serine 2604 and serine 2702. Residues 2788 to 3203 (LDVYPATQMQ…KRMLEELCGN (416 aa)) are condensation 3. A disordered region spans residues 2976–3002 (VIKGNNNTTPPPPPQQQSTPSGAHHAS).

The protein belongs to the NRP synthetase family. Pantetheine 4'-phosphate is required as a cofactor.

The enzyme catalyses 2 (R)-3-phenyllactate + 2 (R)-lactate + 4 L-leucine + 4 S-adenosyl-L-methionine + 8 ATP = PF1022A + 8 AMP + 4 S-adenosyl-L-homocysteine + 8 diphosphate + 8 H(+). It catalyses the reaction 4 (R)-3-phenyllactate + 4 L-leucine + 4 S-adenosyl-L-methionine + 8 ATP = PF1022B + 8 AMP + 4 S-adenosyl-L-homocysteine + 8 diphosphate + 8 H(+). The catalysed reaction is 3 (R)-3-phenyllactate + (R)-lactate + 4 L-leucine + 4 S-adenosyl-L-methionine + 8 ATP = PF1022C + 8 AMP + 4 S-adenosyl-L-homocysteine + 8 diphosphate + 8 H(+). It carries out the reaction (R)-3-phenyllactate + 3 (R)-lactate + 4 L-leucine + 4 S-adenosyl-L-methionine + 8 ATP = PF1022D + 8 AMP + 4 S-adenosyl-L-homocysteine + 8 diphosphate + 8 H(+). The enzyme catalyses 4 (R)-lactate + 4 L-leucine + 4 S-adenosyl-L-methionine + 8 ATP = PF1022F + 8 AMP + 4 S-adenosyl-L-homocysteine + 8 diphosphate + 8 H(+). In terms of biological role, nonribosomal peptide synthetase that synthesizes cyclooctadepsipeptides (CODPs) PF 1022 that show powerful broad-spectrum anthelmintic activity with low toxicity in animals. Couples 4 N-methyl-L-leucines and a varying content of alpha-D-hydroxy acids (D-lactates or D-phenyllactates) in an alternative fashion. The enzyme is capable of synthesizing all known natural cyclooctadepsipeptides of the PF1022 type differing in the content of D-lactate and D-phenyllactate, using from 4 D-lactates (PF 1022F) to 4 D-phenyllactates (PF 1022B), respectively. The formation of different PF-related compounds is mainly controlled by the molar ratio of the hydroxy acids. N-methylation of the substrate L-leucine takes place after covalent binding prior to peptide bond formation. This Rosellinia sp. (Mycelia sterilia) protein is PF 1022-synthetase.